Consider the following 75-residue polypeptide: DNA-directed RNA polymerase subunit omega (75 aa).

It belongs to the RNA polymerase subunit omega family. In terms of assembly, the RNAP catalytic core consists of 2 alpha, 1 beta, 1 beta' and 1 omega subunit. When a sigma factor is associated with the core the holoenzyme is formed, which can initiate transcription.

It carries out the reaction RNA(n) + a ribonucleoside 5'-triphosphate = RNA(n+1) + diphosphate. In terms of biological role, promotes RNA polymerase assembly. Latches the N- and C-terminal regions of the beta' subunit thereby facilitating its interaction with the beta and alpha subunits. The protein is DNA-directed RNA polymerase subunit omega of Nitratidesulfovibrio vulgaris (strain DSM 19637 / Miyazaki F) (Desulfovibrio vulgaris).